Consider the following 58-residue polypeptide: U11-ctenitoxin-Pn1b (58 aa).

Cystine bridges form between C2–C16, C9–C22, C15–C40, C24–C38, and C48–C55.

Expressed by the venom gland.

The protein resides in the secreted. Non-toxic to mice. This is U11-ctenitoxin-Pn1b from Phoneutria nigriventer (Brazilian armed spider).